A 402-amino-acid chain; its full sequence is Aminotransferase-like protein FGM3 (402 aa).

Residues 137 to 138 (TI), Asp218, and 282 to 283 (FG) contribute to the pyridoxal 5'-phosphate site.

It belongs to the class-V pyridoxal-phosphate-dependent aminotransferase family. Csd subfamily.

Functionally, aminotransferase-like protein; part of the Fg3_54/C64 gene cluster that mediates the biosynthesis of the octapeptide fusaoctaxin A, a virulence factor that is required for cell-to-cell invasiveness of plant host. The 2 nonribosomal peptide synthetases NRPS9 and NRPS5 form an assembly line which likely utilizes GABA as a starter unit (loaded on the unique module M1 of NRPS9) and sequentially incorporates seven extender units composed of the residues L-Ala, L-allo-Ile, L-Ser, L-Val, L-Ser, L-Leu and L-Leu, respectively. During the process, each of the residues that are tethered on modules M3-M7 of NRPS5 containing an E domain can undergo an epimerization reaction to produce a D-configuration before the transpeptidation reaction occurs. The elongation of the peptidyl chain might be terminated by module M8-mediated L-Leu incorporation, followed by R domain-catalyzed 4 electron reduction to release the resulting octapeptide from the assembly line as an alcohol. Fusaoctaxin A is cleaved by the cluster specific ABC transporter FGM5 to the pentapeptide fusapentaxin A and the tripeptide fusatrixin A. The other enzymes from the cluster, FGM1, FGM2, FGM3 and FGM9 seem not to be involved in the biosynthesis of fusaoctaxin A and their functions have still to be determined. The polypeptide is Aminotransferase-like protein FGM3 (Gibberella zeae (strain ATCC MYA-4620 / CBS 123657 / FGSC 9075 / NRRL 31084 / PH-1) (Wheat head blight fungus)).